Here is a 539-residue protein sequence, read N- to C-terminus: Serine/threonine-protein kinase BUR1 (539 aa).

Residues 1–15 (MEKLSETTPNGTSPR) show a composition bias toward polar residues. The interval 1-27 (MEKLSETTPNGTSPRTFALNHSRPRSS) is disordered. One can recognise a Protein kinase domain in the interval 37–339 (YELLGKLGEG…AVDALQHPWF (303 aa)). ATP is bound by residues 43 to 51 (LGEGTFGEV) and Lys66. Asp169 (proton acceptor) is an active-site residue. Residues 370-539 (AALPPAPKGG…DRPDHNGYRR (170 aa)) form a disordered region. Basic and acidic residues-rich tracts occupy residues 414–428 (NGPD…RERG), 471–514 (NRDD…DRGT), and 521–539 (PRHD…GYRR).

This sequence belongs to the protein kinase superfamily. CMGC Ser/Thr protein kinase family. CDC2/CDKX subfamily.

The protein resides in the nucleus. The enzyme catalyses L-seryl-[protein] + ATP = O-phospho-L-seryl-[protein] + ADP + H(+). It catalyses the reaction L-threonyl-[protein] + ATP = O-phospho-L-threonyl-[protein] + ADP + H(+). It carries out the reaction [DNA-directed RNA polymerase] + ATP = phospho-[DNA-directed RNA polymerase] + ADP + H(+). In terms of biological role, serine/threonine-protein kinase involved in transcription regulation. Phosphorylates the UBC2/RAD6 ubiquitin-conjugating enzyme (E2), leading to monoubiquitination of histone H2B and the silencing of telomeric-associated genes. Also required for histone H3 methylation. Necessary for the recovery from pheromone-induced growth arrest in the cell cycle G1 phase. This is Serine/threonine-protein kinase BUR1 (BUR1) from Gibberella zeae (strain ATCC MYA-4620 / CBS 123657 / FGSC 9075 / NRRL 31084 / PH-1) (Wheat head blight fungus).